The primary structure comprises 431 residues: Adenylosuccinate synthetase 2 (431 aa).

GTP is bound by residues 13–19 (GDEGKGK) and 41–43 (GHT). Catalysis depends on aspartate 14, which acts as the Proton acceptor. The Mg(2+) site is built by aspartate 14 and glycine 41. IMP-binding positions include 14 to 17 (DEGK), 39 to 42 (NAGH), threonine 130, arginine 144, glutamine 225, threonine 240, and arginine 304. The active-site Proton donor is the histidine 42. 300-306 (SVTGRPR) provides a ligand contact to substrate. Residues arginine 306, 332–334 (KLD), and 414–416 (STG) each bind GTP.

It belongs to the adenylosuccinate synthetase family. Homodimer. Mg(2+) is required as a cofactor.

It localises to the cytoplasm. It catalyses the reaction IMP + L-aspartate + GTP = N(6)-(1,2-dicarboxyethyl)-AMP + GDP + phosphate + 2 H(+). The protein operates within purine metabolism; AMP biosynthesis via de novo pathway; AMP from IMP: step 1/2. Functionally, plays an important role in the de novo pathway of purine nucleotide biosynthesis. Catalyzes the first committed step in the biosynthesis of AMP from IMP. This chain is Adenylosuccinate synthetase 2, found in Chromobacterium violaceum (strain ATCC 12472 / DSM 30191 / JCM 1249 / CCUG 213 / NBRC 12614 / NCIMB 9131 / NCTC 9757 / MK).